The following is a 508-amino-acid chain: MGLPWYRVHTVVLNDPGRLLAVHIMHTALVAGWAGSMALYELAVFDPSDPVLDPMWRQGMFVIPFMTRLGITSSWGGWSITGGATPNPGIWSYEGVAGAHIVFSGLCFLAAIWHWTYWDLAIFCDERTGKPSLDLPKIFGIHLFLAGLACFGFGAFHVTGLYGPGIWVSDPYGLTGKVQSVNPAWGVEGFDPFVPGGIASHHIAAGTLGILAGLFHLSVRPPQRLYKGLRMGNIETVLSSSIAAVFFAAFVVAGTMWYGSATTPIELFGPTRYQWDQGYFQQEIYRRVSAGLAENQSLSEAWSKIPEKLAFYDYIGNNPAKGGLFRAGSMDNGDGIAVGWLGHPIFRDKEGRELFVRRMPTFFETFPVVLVDGDGIVRADVPFRRAESKYSVEQVGVTVEFYGGELNGVSYSDPATVKKYARRAQLGEIFELDRATLKSDGVFRSSPRGWFTFGHASFALLFFFGHIWHGARTLFRDVFAGIDPDLDAQVEFGAFQKLGDPTTRRQTV.

Transmembrane regions (helical) follow at residues 21–36 (AVHI…WAGS), 101–115 (IVFS…IWHW), 140–156 (GIHL…FGAF), 203–218 (IAAG…FHLS), 237–252 (VLSS…AFVV), and 457–472 (SFAL…HGAR).

Belongs to the PsbB/PsbC family. PsbB subfamily. As to quaternary structure, PSII is composed of 1 copy each of membrane proteins PsbA, PsbB, PsbC, PsbD, PsbE, PsbF, PsbH, PsbI, PsbJ, PsbK, PsbL, PsbM, PsbT, PsbX, PsbY, PsbZ, Psb30/Ycf12, at least 3 peripheral proteins of the oxygen-evolving complex and a large number of cofactors. It forms dimeric complexes. Binds multiple chlorophylls. PSII binds additional chlorophylls, carotenoids and specific lipids. is required as a cofactor.

Its subcellular location is the plastid. The protein localises to the chloroplast thylakoid membrane. One of the components of the core complex of photosystem II (PSII). It binds chlorophyll and helps catalyze the primary light-induced photochemical processes of PSII. PSII is a light-driven water:plastoquinone oxidoreductase, using light energy to abstract electrons from H(2)O, generating O(2) and a proton gradient subsequently used for ATP formation. This Daucus carota (Wild carrot) protein is Photosystem II CP47 reaction center protein.